Here is a 50-residue protein sequence, read N- to C-terminus: Temporin-SHb (50 aa).

An N-terminal signal peptide occupies residues 1–10; that stretch reads FLGTINLSLC. A propeptide spanning residues 11-35 is cleaved from the precursor; sequence EQERDADEEERRDEPDESDVEVEKR. The interval 12–31 is disordered; sequence QERDADEEERRDEPDESDVE. Acidic residues predominate over residues 14-30; it reads RDADEEERRDEPDESDV. Leucine amide is present on L48.

This sequence belongs to the frog skin active peptide (FSAP) family. Temporin subfamily. As to expression, expressed by the skin glands.

Its subcellular location is the secreted. Functionally, amphipathic alpha-helical peptide with no antimicrobial activity. Does not display anti-leishmania activity. Does not show hemolytic activity (LC(50)&gt;116 uM). The protein is Temporin-SHb of Pelophylax saharicus (Sahara frog).